The primary structure comprises 431 residues: Adenylosuccinate synthetase (431 aa).

Residues 13 to 19 and 41 to 43 contribute to the GTP site; these read GDEGKGK and GHT. Aspartate 14 functions as the Proton acceptor in the catalytic mechanism. The Mg(2+) site is built by aspartate 14 and glycine 41. IMP-binding positions include 14–17, 39–42, threonine 130, arginine 144, glutamine 225, threonine 240, and arginine 304; these read DEGK and NAGH. The active-site Proton donor is histidine 42. 300-306 provides a ligand contact to substrate; it reads SVTGRPR. GTP is bound by residues arginine 306, 332–334, and 414–416; these read KLD and STG.

Belongs to the adenylosuccinate synthetase family. As to quaternary structure, homodimer. It depends on Mg(2+) as a cofactor.

Its subcellular location is the cytoplasm. The catalysed reaction is IMP + L-aspartate + GTP = N(6)-(1,2-dicarboxyethyl)-AMP + GDP + phosphate + 2 H(+). It participates in purine metabolism; AMP biosynthesis via de novo pathway; AMP from IMP: step 1/2. In terms of biological role, plays an important role in the de novo pathway of purine nucleotide biosynthesis. Catalyzes the first committed step in the biosynthesis of AMP from IMP. The polypeptide is Adenylosuccinate synthetase (Bordetella petrii (strain ATCC BAA-461 / DSM 12804 / CCUG 43448)).